Here is a 242-residue protein sequence, read N- to C-terminus: Carboxy-S-adenosyl-L-methionine synthase (242 aa).

Residues Tyr39, 64–66 (GCS), 89–90 (DN), 117–118 (DI), Asn132, and Arg199 contribute to the S-adenosyl-L-methionine site.

It belongs to the class I-like SAM-binding methyltransferase superfamily. Cx-SAM synthase family. Homodimer.

It catalyses the reaction prephenate + S-adenosyl-L-methionine = carboxy-S-adenosyl-L-methionine + 3-phenylpyruvate + H2O. In terms of biological role, catalyzes the conversion of S-adenosyl-L-methionine (SAM) to carboxy-S-adenosyl-L-methionine (Cx-SAM). This Psychromonas ingrahamii (strain DSM 17664 / CCUG 51855 / 37) protein is Carboxy-S-adenosyl-L-methionine synthase.